We begin with the raw amino-acid sequence, 251 residues long: tRNA1(Val) (adenine(37)-N6)-methyltransferase (251 aa).

The protein belongs to the methyltransferase superfamily. tRNA (adenine-N(6)-)-methyltransferase family.

It is found in the cytoplasm. The enzyme catalyses adenosine(37) in tRNA1(Val) + S-adenosyl-L-methionine = N(6)-methyladenosine(37) in tRNA1(Val) + S-adenosyl-L-homocysteine + H(+). Functionally, specifically methylates the adenine in position 37 of tRNA(1)(Val) (anticodon cmo5UAC). This is tRNA1(Val) (adenine(37)-N6)-methyltransferase from Shewanella frigidimarina (strain NCIMB 400).